A 647-amino-acid chain; its full sequence is Protein FAM161A (647 aa).

Disordered regions lie at residues 32–55 and 143–175; these read RELGDRPHPSASVSPRGPARTSME and PAQHDHLKQSRSVSPSLAESSHESTDEDYGDSE. Positions 152 to 161 are enriched in polar residues; it reads SRSVSPSLAE. 2 coiled-coil regions span residues 243-268 and 518-544; these read IKSKSEIELENNLLKEKLEEEAECQK and AIRKREKQRTKDYMKELEAMEQRVLNK. Disordered regions lie at residues 504–524 and 588–647; these read QTPRSTESSKRREYAIRKREK and DEHV…IEEI. Basic and acidic residues-rich tracts occupy residues 510 to 524 and 588 to 600; these read ESSKRREYAIRKREK and DEHVGVREEKKIP. Residues 613–638 show a composition bias toward acidic residues; sequence DLLDDEEDDKYDCESEEAEEEDAYST.

The protein belongs to the FAM161 family.

The protein resides in the cytoplasm. Its subcellular location is the cytoskeleton. The protein localises to the cilium basal body. It is found in the cell projection. It localises to the cilium. The protein resides in the microtubule organizing center. Its subcellular location is the centrosome. The protein localises to the centriole. In terms of biological role, involved in ciliogenesis. This chain is Protein FAM161A (fam161a), found in Xenopus laevis (African clawed frog).